A 130-amino-acid polypeptide reads, in one-letter code: T-cell receptor alpha chain V region PHDS58 (130 aa).

An N-terminal signal peptide occupies residues 1–20; it reads MLLALLPVLGIHFVLRDAQA. The segment at 21 to 114 is v segment; the sequence is QSVTQPDARV…SAVYFCAVSG (94 aa). N90 carries N-linked (GlcNAc...) asparagine glycosylation. Residues 115 to 130 are j segment; it reads FASALTFGSGTKVIVL.

The chain is T-cell receptor alpha chain V region PHDS58 from Mus musculus (Mouse).